The chain runs to 258 residues: Small ribosomal subunit protein uS2 (258 aa).

This sequence belongs to the universal ribosomal protein uS2 family.

This Streptococcus suis (strain 05ZYH33) protein is Small ribosomal subunit protein uS2.